A 595-amino-acid chain; its full sequence is Chaperone protein HscA homolog (595 aa).

This sequence belongs to the heat shock protein 70 family.

Chaperone involved in the maturation of iron-sulfur cluster-containing proteins. Has a low intrinsic ATPase activity which is markedly stimulated by HscB. This chain is Chaperone protein HscA homolog, found in Rickettsia peacockii (strain Rustic).